We begin with the raw amino-acid sequence, 233 residues long: Large ribosomal subunit protein uL1 (233 aa).

This sequence belongs to the universal ribosomal protein uL1 family. In terms of assembly, part of the 50S ribosomal subunit.

Its function is as follows. Binds directly to 23S rRNA. The L1 stalk is quite mobile in the ribosome, and is involved in E site tRNA release. Protein L1 is also a translational repressor protein, it controls the translation of the L11 operon by binding to its mRNA. In Pelobacter propionicus (strain DSM 2379 / NBRC 103807 / OttBd1), this protein is Large ribosomal subunit protein uL1.